Here is a 947-residue protein sequence, read N- to C-terminus: Bifunctional glutamine synthetase adenylyltransferase/adenylyl-removing enzyme (947 aa).

The interval 1-443 (MQLPSSLVSV…VFETLIGDDE (443 aa)) is adenylyl removase. Residues 451 to 947 (ARHFHELWDM…VKQAWNQWFA (497 aa)) form an adenylyl transferase region.

Belongs to the GlnE family. It depends on Mg(2+) as a cofactor.

It catalyses the reaction [glutamine synthetase]-O(4)-(5'-adenylyl)-L-tyrosine + phosphate = [glutamine synthetase]-L-tyrosine + ADP. It carries out the reaction [glutamine synthetase]-L-tyrosine + ATP = [glutamine synthetase]-O(4)-(5'-adenylyl)-L-tyrosine + diphosphate. Its function is as follows. Involved in the regulation of glutamine synthetase GlnA, a key enzyme in the process to assimilate ammonia. When cellular nitrogen levels are high, the C-terminal adenylyl transferase (AT) inactivates GlnA by covalent transfer of an adenylyl group from ATP to specific tyrosine residue of GlnA, thus reducing its activity. Conversely, when nitrogen levels are low, the N-terminal adenylyl removase (AR) activates GlnA by removing the adenylyl group by phosphorolysis, increasing its activity. The regulatory region of GlnE binds the signal transduction protein PII (GlnB) which indicates the nitrogen status of the cell. This Vibrio parahaemolyticus serotype O3:K6 (strain RIMD 2210633) protein is Bifunctional glutamine synthetase adenylyltransferase/adenylyl-removing enzyme.